A 156-amino-acid chain; its full sequence is Small ribosomal subunit protein uS7 (156 aa).

This sequence belongs to the universal ribosomal protein uS7 family. As to quaternary structure, part of the 30S ribosomal subunit. Contacts proteins S9 and S11.

One of the primary rRNA binding proteins, it binds directly to 16S rRNA where it nucleates assembly of the head domain of the 30S subunit. Is located at the subunit interface close to the decoding center, probably blocks exit of the E-site tRNA. In Shouchella clausii (strain KSM-K16) (Alkalihalobacillus clausii), this protein is Small ribosomal subunit protein uS7.